The sequence spans 806 residues: Protein translocase subunit SecA (806 aa).

ATP is bound by residues glutamine 87, 105–109, and aspartate 493; that span reads GEGKT.

It belongs to the SecA family. As to quaternary structure, monomer and homodimer. Part of the essential Sec protein translocation apparatus which comprises SecA, SecYEG and auxiliary proteins SecDF. Other proteins may also be involved.

The protein localises to the cell membrane. It localises to the cytoplasm. The catalysed reaction is ATP + H2O + cellular proteinSide 1 = ADP + phosphate + cellular proteinSide 2.. Functionally, part of the Sec protein translocase complex. Interacts with the SecYEG preprotein conducting channel. Has a central role in coupling the hydrolysis of ATP to the transfer of proteins into and across the cell membrane, serving as an ATP-driven molecular motor driving the stepwise translocation of polypeptide chains across the membrane. This Mycoplasma genitalium (strain ATCC 33530 / DSM 19775 / NCTC 10195 / G37) (Mycoplasmoides genitalium) protein is Protein translocase subunit SecA.